Here is a 94-residue protein sequence, read N- to C-terminus: Pyrimidine/purine nucleoside phosphorylase (94 aa).

It belongs to the nucleoside phosphorylase PpnP family.

It carries out the reaction a purine D-ribonucleoside + phosphate = a purine nucleobase + alpha-D-ribose 1-phosphate. The catalysed reaction is adenosine + phosphate = alpha-D-ribose 1-phosphate + adenine. The enzyme catalyses cytidine + phosphate = cytosine + alpha-D-ribose 1-phosphate. It catalyses the reaction guanosine + phosphate = alpha-D-ribose 1-phosphate + guanine. It carries out the reaction inosine + phosphate = alpha-D-ribose 1-phosphate + hypoxanthine. The catalysed reaction is thymidine + phosphate = 2-deoxy-alpha-D-ribose 1-phosphate + thymine. The enzyme catalyses uridine + phosphate = alpha-D-ribose 1-phosphate + uracil. It catalyses the reaction xanthosine + phosphate = alpha-D-ribose 1-phosphate + xanthine. Catalyzes the phosphorolysis of diverse nucleosides, yielding D-ribose 1-phosphate and the respective free bases. Can use uridine, adenosine, guanosine, cytidine, thymidine, inosine and xanthosine as substrates. Also catalyzes the reverse reactions. This chain is Pyrimidine/purine nucleoside phosphorylase, found in Salmonella typhimurium (strain LT2 / SGSC1412 / ATCC 700720).